A 199-amino-acid polypeptide reads, in one-letter code: Puromycin N-acetyltransferase (199 aa).

The N-acetyltransferase domain maps to P6–G198.

In terms of biological role, detoxification of puromycin. The polypeptide is Puromycin N-acetyltransferase (pac) (Streptomyces alboniger).